The chain runs to 141 residues: HTH-type transcriptional repressor NsrR (141 aa).

Positions 2-129 constitute an HTH rrf2-type domain; it reads QLTSFTDYGL…DNYTLADLVE (128 aa). Positions 28–51 form a DNA-binding region, H-T-H motif; the sequence is ISEVTEVYGVSRNHMVKIINQLSR. Residues cysteine 91, cysteine 96, and cysteine 102 each contribute to the [2Fe-2S] cluster site.

[2Fe-2S] cluster serves as cofactor.

Its function is as follows. Nitric oxide-sensitive repressor of genes involved in protecting the cell against nitrosative stress. May require iron for activity. In Klebsiella pneumoniae subsp. pneumoniae (strain ATCC 700721 / MGH 78578), this protein is HTH-type transcriptional repressor NsrR.